The primary structure comprises 288 residues: Phenazine biosynthesis-like domain-containing protein (288 aa).

Residue Glu-46 is part of the active site.

The protein belongs to the PhzF family. In terms of assembly, interacts with UNRIP/MAWD.

The sequence is that of Phenazine biosynthesis-like domain-containing protein (PBLD) from Homo sapiens (Human).